Here is a 232-residue protein sequence, read N- to C-terminus: TIR domain-containing adapter molecule 2 (232 aa).

Residues 1–39 (MGVGKSKLDKCPLSWHKKDSVDADQDGHESDSKNSEEAC) show a composition bias toward basic and acidic residues. The tract at residues 1–70 (MGVGKSKLDK…EAKGAGPEEQ (70 aa)) is disordered. Gly2 carries the N-myristoyl glycine lipid modification. The 153-residue stretch at 74–226 (EFLKFVILHA…SIWKETRSVS (153 aa)) folds into the TIR domain. Tyr164 carries the post-translational modification Phosphotyrosine.

As to quaternary structure, homodimer. Interacts with TLR4, TICAM1, IRF3 and IRF7 in response to LPS. Interacts with IL1R1, IL1RAP, IRAK2, IRAK3 and TRAF6. Interacts with protein kinase-inactive mutants of IRAK1 and IRAK4. Isoform 1 interacts with isoform 2; the interaction occurs in late endosomes and disrupts the interaction between isoform 1 and TICAM1. Interacts with MYD88; the interaction decreases after IL-18 stimulation in a time-dependent manner. Interacts with IL18R1 and IL18RAP. Interacts with TLR2. Interacts with RAB11FIP2. In terms of processing, myristoylated. Required for membrane association which is critical for its ability to initiate efficient signaling. Post-translationally, phosphorylated by PRKCE in response to LPS. Phosphorylation is essential for its function. It is depleted from the membrane upon phosphorylation. Tyrosine phosphorylation is inhibited by phosphatase PTPN4.

Its subcellular location is the cytoplasm. The protein resides in the golgi apparatus. The protein localises to the cell membrane. It localises to the early endosome. It is found in the late endosome. Its subcellular location is the endoplasmic reticulum. The protein resides in the cell projection. The protein localises to the phagocytic cup. Functions as a sorting adapter in different signaling pathways to facilitate downstream signaling leading to type I interferon induction. In TLR4 signaling, physically bridges TLR4 and TICAM1 and functionally transmits signal to TICAM1 in early endosomes after endocytosis of TLR4. In TLR2 signaling, physically bridges TLR2 and MYD88 and is required for the TLR2-dependent movement of MYD88 to endosomes following ligand engagement. Involved in IL-18 signaling and is proposed to function as a sorting adapter for MYD88 in IL-18 signaling during adaptive immune response. Forms a complex with RAB11FIP2 that is recruited to the phagosomes to promote the activation of the actin-regulatory GTPases RAC1 and CDC42 and subsequent phagocytosis of Gram-negative bacteria. This Mus musculus (Mouse) protein is TIR domain-containing adapter molecule 2 (Ticam2).